Reading from the N-terminus, the 558-residue chain is Urocanate hydratase (558 aa).

NAD(+) contacts are provided by residues 50-51, Gln-128, 174-176, Glu-194, Arg-199, 240-241, 261-265, 271-272, and Tyr-320; these read GG, GMG, NA, QTSAH, and YI. The active site involves Cys-408. Position 490 (Gly-490) interacts with NAD(+).

This sequence belongs to the urocanase family. NAD(+) serves as cofactor.

The protein resides in the cytoplasm. It catalyses the reaction 4-imidazolone-5-propanoate = trans-urocanate + H2O. It functions in the pathway amino-acid degradation; L-histidine degradation into L-glutamate; N-formimidoyl-L-glutamate from L-histidine: step 2/3. Its function is as follows. Catalyzes the conversion of urocanate to 4-imidazolone-5-propionate. The chain is Urocanate hydratase from Deinococcus radiodurans (strain ATCC 13939 / DSM 20539 / JCM 16871 / CCUG 27074 / LMG 4051 / NBRC 15346 / NCIMB 9279 / VKM B-1422 / R1).